A 211-amino-acid polypeptide reads, in one-letter code: Small ribosomal subunit protein uS3 (211 aa).

The 69-residue stretch at 38–106 (LRNFLKKRLY…EVYLNIQEVR (69 aa)) folds into the KH type-2 domain.

Belongs to the universal ribosomal protein uS3 family. Part of the 30S ribosomal subunit. Forms a tight complex with proteins S10 and S14.

Binds the lower part of the 30S subunit head. Binds mRNA in the 70S ribosome, positioning it for translation. This Geobacter sp. (strain M21) protein is Small ribosomal subunit protein uS3.